The chain runs to 862 residues: Chaperone protein ClpB 1 (862 aa).

A Clp R domain is found at 5-147 (AEQFTEQAWA…KEAITAVRGN (143 aa)). Repeat regions lie at residues 8–72 (FTEQ…LQRL) and 84–147 (LGRS…VRGN). The NBD1 stretch occupies residues 160–341 (ESLAKYGRDL…RRFQQVLVDQ (182 aa)). 207 to 214 (GEPGVGKT) is a binding site for ATP. A linker region spans residues 342-550 (PTVPDTISIL…IAEVIAKWTG (209 aa)). The stretch at 392–526 (IDLVDESAAR…QEDLLEDEDG (135 aa)) forms a coiled coil. The segment at 560–771 (EMEKLLQLED…RLDDQIIFRS (212 aa)) is NBD2. Residue 610-617 (GPTGVGKT) participates in ATP binding. Residues 772 to 862 (LEKEELRRIV…DAGDDKLSIS (91 aa)) form a C-terminal region.

It belongs to the ClpA/ClpB family. In terms of assembly, homohexamer. The oligomerization is ATP-dependent.

It localises to the cytoplasm. Its function is as follows. Part of a stress-induced multi-chaperone system, it is involved in the recovery of the cell from heat-induced damage, in cooperation with DnaK, DnaJ and GrpE. Acts before DnaK, in the processing of protein aggregates. Protein binding stimulates the ATPase activity; ATP hydrolysis unfolds the denatured protein aggregates, which probably helps expose new hydrophobic binding sites on the surface of ClpB-bound aggregates, contributing to the solubilization and refolding of denatured protein aggregates by DnaK. The chain is Chaperone protein ClpB 1 (clpB1) from Parasynechococcus marenigrum (strain WH8102).